The following is a 312-amino-acid chain: MPPRKAPAKRRSTDSGVERDRGALSQEKKDQRIALFLSDFDQQAKESIREMKKELDLLLQMAEKAFMVELLKMPTAIRKMKRKDLLNLQEGEEVALAAAATDCALEDVPSPKVTRTNSKKVKVTTIVEYEDAKYTSTKKIPKKVSKSKSLVSLSSGLNSKLHSLSRSVYSSTSVNEAVKTPASDCSATNFKAMPKVSKSAGLQQAVSRTVPTSERVQGMVLRSKSVPQDKMVPFVNIPLADGQTLCMAGGDLRNIDVQLLNQDTVQHIHNLVVSLNQQTCIPTHSSTLSCEINVPGADSSCVFLLRLRNTSD.

Residues methionine 1–arginine 10 show a composition bias toward basic residues. The disordered stretch occupies residues methionine 1–glutamine 26. Over residues arginine 11–glutamine 26 the composition is skewed to basic and acidic residues.

The protein belongs to the borealin family. In terms of assembly, component of the CPC complex.

It localises to the nucleus. The protein localises to the chromosome. Its subcellular location is the centromere. Its function is as follows. Component of the chromosomal passenger complex (CPC), a complex that acts as a key regulator of mitosis. The CPC complex has essential functions at the centromere in ensuring correct chromosome alignment and segregation and is required for chromatin-induced microtubule stabilization and spindle assembly. The sequence is that of Borealin-2 from Gallus gallus (Chicken).